Consider the following 191-residue polypeptide: uncharacterized protein (191 aa).

Residues 5-65 (GDSREKILHT…IEAVTYTGKI (61 aa)) enclose the HTH tetR-type domain. Residues 28–47 (GLNQIVKESGAPKGSLYHFF) constitute a DNA-binding region (H-T-H motif).

This is an uncharacterized protein from Bacillus subtilis (strain 168).